Consider the following 146-residue polypeptide: Probable gamma-secretase subunit PEN-2 (146 aa).

Residues 1 to 26 form a disordered region; it reads MEATRSDDPSLNPIRNRNPNPNPNPN. At 1-61 the chain is on the lumenal side; it reads MEATRSDDPS…SVDYARRFYK (61 aa). The span at 9 to 19 shows a compositional bias: low complexity; it reads PSLNPIRNRNP. Residues 62–82 form a helical membrane-spanning segment; the sequence is FGFALLPWLWFVNCFYFWPVL. At 83-98 the chain is on the cytoplasmic side; the sequence is RHSRAFPQIRNYVVRS. A helical transmembrane segment spans residues 99–119; it reads AIGFSVFTALLSAWALTFSIG. Residues 120–146 lie on the Lumenal side of the membrane; the sequence is GEQLFGPLYDKLVMYNVADRLGLSGLA.

This sequence belongs to the PEN-2 family. In terms of assembly, probable component of the gamma-secretase complex, a complex composed of a presenilin homodimer, nicastrin, APH1 and PEN2.

The protein localises to the membrane. Its function is as follows. Probable subunit of the gamma-secretase complex, an endoprotease complex that catalyzes the intramembrane cleavage of integral membrane proteins such as Notch receptors. This Arabidopsis thaliana (Mouse-ear cress) protein is Probable gamma-secretase subunit PEN-2.